The primary structure comprises 131 residues: Phosphoribosyl-AMP cyclohydrolase (131 aa).

Mg(2+) is bound at residue Asp80. A Zn(2+)-binding site is contributed by Cys81. Residues Asp82 and Asp84 each contribute to the Mg(2+) site. Zn(2+) is bound by residues Cys98 and Cys105.

It belongs to the PRA-CH family. In terms of assembly, homodimer. It depends on Mg(2+) as a cofactor. The cofactor is Zn(2+).

It localises to the cytoplasm. The enzyme catalyses 1-(5-phospho-beta-D-ribosyl)-5'-AMP + H2O = 1-(5-phospho-beta-D-ribosyl)-5-[(5-phospho-beta-D-ribosylamino)methylideneamino]imidazole-4-carboxamide. It participates in amino-acid biosynthesis; L-histidine biosynthesis; L-histidine from 5-phospho-alpha-D-ribose 1-diphosphate: step 3/9. Its function is as follows. Catalyzes the hydrolysis of the adenine ring of phosphoribosyl-AMP. The sequence is that of Phosphoribosyl-AMP cyclohydrolase from Azoarcus sp. (strain BH72).